Here is a 458-residue protein sequence, read N- to C-terminus: Flavohemoprotein (458 aa).

The region spanning 2–158 (TLSEDTLRAV…LADLFIKREE (157 aa)) is the Globin domain. Heme b is bound at residue His107. Residues Tyr117 and Glu157 each act as charge relay system in the active site. A reductase region spans residues 169-457 (GGWRQTRTFR…FEMFGPFKAS (289 aa)). The FAD-binding FR-type domain occupies 172–279 (RQTRTFRVEE…APPYGDFFLR (108 aa)). FAD-binding positions include Tyr211 and 228 to 231 (RQYS). 321–326 (GIGQTP) provides a ligand contact to NADP(+). 450–453 (MFGP) provides a ligand contact to FAD.

This sequence belongs to the globin family. Two-domain flavohemoproteins subfamily. In the C-terminal section; belongs to the flavoprotein pyridine nucleotide cytochrome reductase family. As to quaternary structure, monomer. Heme b is required as a cofactor. It depends on FAD as a cofactor.

It catalyses the reaction 2 nitric oxide + NADPH + 2 O2 = 2 nitrate + NADP(+) + H(+). The enzyme catalyses 2 nitric oxide + NADH + 2 O2 = 2 nitrate + NAD(+) + H(+). Functionally, flavohemoprotein involved in nitric oxide (NO) detoxification in an aerobic process, termed nitric oxide dioxygenase (NOD) reaction that utilizes O(2) and NAD(P)H to convert NO to nitrate, which protects the protozoan parasite from various noxious nitrogen compounds. Therefore, plays a central role in the inducible response to nitrosative stress. May also be involved in O(2) detoxification. The sequence is that of Flavohemoprotein (hmpA) from Giardia intestinalis (strain ATCC 50803 / WB clone C6) (Giardia lamblia).